The chain runs to 233 residues: ATP synthase subunit a (233 aa).

The next 6 membrane-spanning stretches (helical) occupy residues 27–47 (ANFV…FAIL), 85–105 (YLAF…IGVV), 114–134 (VPSV…IVGV), 143–163 (LAHF…IELV), 189–209 (VFLK…HVFV), and 210–230 (SFLQ…GAVA).

Belongs to the ATPase A chain family. As to quaternary structure, F-type ATPases have 2 components, CF(1) - the catalytic core - and CF(0) - the membrane proton channel. CF(1) has five subunits: alpha(3), beta(3), gamma(1), delta(1), epsilon(1). CF(0) has three main subunits: a(1), b(2) and c(9-12). The alpha and beta chains form an alternating ring which encloses part of the gamma chain. CF(1) is attached to CF(0) by a central stalk formed by the gamma and epsilon chains, while a peripheral stalk is formed by the delta and b chains.

The protein localises to the cell inner membrane. Its function is as follows. Key component of the proton channel; it plays a direct role in the translocation of protons across the membrane. The polypeptide is ATP synthase subunit a (Solibacter usitatus (strain Ellin6076)).